Reading from the N-terminus, the 457-residue chain is Argininosuccinate lyase (457 aa).

This sequence belongs to the lyase 1 family. Argininosuccinate lyase subfamily.

The protein localises to the cytoplasm. The catalysed reaction is 2-(N(omega)-L-arginino)succinate = fumarate + L-arginine. It functions in the pathway amino-acid biosynthesis; L-arginine biosynthesis; L-arginine from L-ornithine and carbamoyl phosphate: step 3/3. This is Argininosuccinate lyase from Histophilus somni (strain 129Pt) (Haemophilus somnus).